The primary structure comprises 105 residues: Small ribosomal subunit protein uS10 (105 aa).

Belongs to the universal ribosomal protein uS10 family. In terms of assembly, part of the 30S ribosomal subunit.

Involved in the binding of tRNA to the ribosomes. This Desulfotalea psychrophila (strain LSv54 / DSM 12343) protein is Small ribosomal subunit protein uS10.